The chain runs to 362 residues: MAQIFNFSSGPAMLPAEVLKQAQQELRDWNGLGTSVMEVSHRGKEFIQVAEEAEKDFRDLLNVPSNYKVLFCHGGGRGQFAAVPLNILGDKTTADYVDAGYWAASAIKEAKKYCTPNVFDAKVTVDGLRAVKPMREWQLSDNAAYMHYCPNETIDGIAIDETPDFGADVVVAADFSSTILSRPIDVSRYGVIYAGAQKNIGPAGLTIVIVREDLLGKANIACPSILDYSILNDNGSMFNTPPTFAWYLSGLVFKWLKANGGVAEMDKINQQKAELLYGVIDNSDFYRNDVAKANRSRMNVPFQLADSALDKLFLEESFAAGLHALKGHRVVGGMRASIYNAMPLEGVKALTDFMVEFERRHG.

2 residues coordinate L-glutamate: Ser9 and Arg42. Pyridoxal 5'-phosphate contacts are provided by residues 76 to 77 (GR), Trp102, Thr153, Asp174, and Gln197. Lys198 is subject to N6-(pyridoxal phosphate)lysine. 239 to 240 (NT) lines the pyridoxal 5'-phosphate pocket.

The protein belongs to the class-V pyridoxal-phosphate-dependent aminotransferase family. SerC subfamily. Homodimer. Pyridoxal 5'-phosphate is required as a cofactor.

The protein resides in the cytoplasm. The enzyme catalyses O-phospho-L-serine + 2-oxoglutarate = 3-phosphooxypyruvate + L-glutamate. It carries out the reaction 4-(phosphooxy)-L-threonine + 2-oxoglutarate = (R)-3-hydroxy-2-oxo-4-phosphooxybutanoate + L-glutamate. It participates in amino-acid biosynthesis; L-serine biosynthesis; L-serine from 3-phospho-D-glycerate: step 2/3. It functions in the pathway cofactor biosynthesis; pyridoxine 5'-phosphate biosynthesis; pyridoxine 5'-phosphate from D-erythrose 4-phosphate: step 3/5. Functionally, catalyzes the reversible conversion of 3-phosphohydroxypyruvate to phosphoserine and of 3-hydroxy-2-oxo-4-phosphonooxybutanoate to phosphohydroxythreonine. Is involved in both pyridoxine and serine biosynthesis. The protein is Phosphoserine aminotransferase (serC) of Escherichia coli (strain K12).